The sequence spans 470 residues: Maturase K (470 aa).

The protein belongs to the intron maturase 2 family. MatK subfamily.

It is found in the plastid. Its subcellular location is the chloroplast. Usually encoded in the trnK tRNA gene intron. Probably assists in splicing its own and other chloroplast group II introns. In Nypa fruticans (Nypa palm), this protein is Maturase K.